Reading from the N-terminus, the 205-residue chain is Dr1-associated corepressor (205 aa).

The region spanning P14–E77 is the Histone-fold domain. Residues P91–S205 are disordered. The span at E98 to P108 shows a compositional bias: basic and acidic residues. Positions S138–T155 are enriched in acidic residues. The span at P172–S193 shows a compositional bias: pro residues. Over residues E196 to S205 the composition is skewed to acidic residues.

This sequence belongs to the NC2 alpha/DRAP1 family. In terms of assembly, heterodimer with DR1. Binds BTAF1. In terms of processing, phosphorylation reduces DNA binding, but has no effect on heterodimerization and TBP binding.

The protein resides in the nucleus. In terms of biological role, the association of the DR1/DRAP1 heterodimer with TBP results in a functional repression of both activated and basal transcription of class II genes. This interaction precludes the formation of a transcription-competent complex by inhibiting the association of TFIIA and/or TFIIB with TBP. Can bind to DNA on its own. The polypeptide is Dr1-associated corepressor (Rattus norvegicus (Rat)).